The chain runs to 100 residues: uncharacterized protein (100 aa).

This is an uncharacterized protein from Bacillus anthracis.